The primary structure comprises 295 residues: Nucleotide-binding protein YjiE (295 aa).

12–19 (GMSGAGKT) provides a ligand contact to ATP. 63-66 (DMRS) serves as a coordination point for GTP.

Belongs to the RapZ-like family.

Its function is as follows. Displays ATPase and GTPase activities. In Lactococcus lactis subsp. lactis (strain IL1403) (Streptococcus lactis), this protein is Nucleotide-binding protein YjiE (yjiE).